The primary structure comprises 517 residues: DNA-binding protein Ikaros (517 aa).

Residues 1 to 71 (MDVDEGQDMS…QSDEENGRAC (71 aa)) form a disordered region. A Phosphoserine modification is found at Ser-13. Phosphothreonine is present on Thr-23. A compositionally biased stretch (polar residues) spans 37–47 (LSTTSGAQQNS). A Glycyl lysine isopeptide (Lys-Gly) (interchain with G-Cter in SUMO) cross-link involves residue Lys-58. A phosphoserine mark is found at Ser-63 and Ser-101. A C2H2-type 1 zinc finger spans residues 117-139 (LKCDICGIVCIGPNVLMVHKRSH). The residue at position 140 (Thr-140) is a Phosphothreonine. The C2H2-type 2 zinc finger occupies 144 to 166 (FQCNQCGASFTQKGNLLRHIKLH). The segment at 153–162 (FTQKGNLLRH) is required for both high-affinity DNA binding and pericentromeric heterochromatin localization. Ser-167 is modified (phosphoserine). The C2H2-type 3 zinc finger occupies 172–194 (FKCHLCNYACRRRDALTGHLRTH). Residues 179–194 (YACRRRDALTGHLRTH) are required for both high-affinity DNA binding and pericentromeric heterochromatin localization. Position 195 is a phosphoserine (Ser-195). A C2H2-type 4 zinc finger spans residues 200 to 223 (HKCGYCGRSYKQRSSLEEHKERCH). Lys-239 is covalently cross-linked (Glycyl lysine isopeptide (Lys-Gly) (interchain with G-Cter in SUMO)). A phosphoserine mark is found at Ser-259, Ser-287, Ser-293, Ser-357, Ser-360, Ser-384, Ser-386, Ser-388, and Ser-392. Residues 376–400 (SVSSEREASPSNSCQDSTDTESNAE) form a disordered region. Position 393 is a phosphothreonine (Thr-393). Phosphoserine is present on residues Ser-397 and Ser-440. C2H2-type zinc fingers lie at residues 457 to 479 (YKCE…MGCH) and 488 to 512 (FECN…RGEH). Positions 463-466 (RVLF) are required for binding PP1CC.

It belongs to the Ikaros C2H2-type zinc-finger protein family. Heterodimer with other IKAROS family members. Interacts with IKZF4 and IKZF5. Component of the chromatin-remodeling NuRD repressor complex which includes at least HDAC1, HDAC2, RBBP4, RBBP7, IKZF1, MTA2, MBD2, MBD3, MTA1L1, CHD3 and CHD4. Interacts directly with the CHD4 component of the NuRD complex. Interacts directly with SMARCA4; the interaction associates IKFZ1 with the BAF complex. Interacts with SUMO1; the interaction sumoylates IKAROS, promoted by PIAS2 and PIAS3. Interacts with PIAS2 (isoform alpha); the interaction promotes sumoylation and reduces transcription repression. Interacts, to a lesser extent, with PIAS3. Interacts with PPP1CC; the interaction targets PPP1CC to pericentromeric heterochromatin, dephosphorylates IKAROS, stabilizes it and prevents it from degradation. Interacts with IKZF3. Phosphorylation at Ser-357 and Ser-360 downstream of SYK induces nuclear translocation. Phosphorylation controls cell-cycle progression from late G(1) stage to S stage. Hyperphosphorylated during G2/M phase. Dephosphorylated state during late G(1) phase. Phosphorylation on Thr-140 is required for DNA and pericentromeric location during mitosis. CK2 is the main kinase, in vitro. GSK3 and CDK may also contribute to phosphorylation of the C-terminal serine and threonine residues. Phosphorylation on these C-terminal residues reduces the DNA-binding ability. Phosphorylation/dephosphorylation events on Ser-13 and Ser-293 regulate TDT expression during thymocyte differentiation. Dephosphorylation by protein phosphatase 1 regulates stability and pericentromeric heterochromatin location. Phosphorylated in both lymphoid and non-lymphoid tissues. Post-translationally, sumoylated. Simultaneous sumoylation on the 2 sites results in a loss of both HDAC-dependent and HDAC-independent repression. Has no effect on pericentromeric heterochromatin location. Desumoylated by SENP1. In terms of processing, polyubiquitinated. In terms of tissue distribution, strongly expressed in T-cells and their progenitors,in B-cells, and in all early embryonic retinal progenitor cells (RPCs). Isoforms V and VI are the predominant isoforms in lymphocytes.

Its subcellular location is the nucleus. The protein localises to the cytoplasm. In terms of biological role, transcription regulator of hematopoietic cell differentiation. Binds gamma-satellite DNA. Binds with higher affinity to gamma satellite A. Plays a role in the development of lymphocytes, B- and T-cells. Binds and activates the enhancer (delta-A element) of the CD3-delta gene. Repressor of the TDT (terminal deoxynucleotidyltransferase) gene during thymocyte differentiation. Regulates transcription through association with both HDAC-dependent and HDAC-independent complexes. Targets the 2 chromatin-remodeling complexes, NuRD and BAF (SWI/SNF), in a single complex (PYR complex), to the beta-globin locus in adult erythrocytes. Increases normal apoptosis in adult erythroid cells. Confers early temporal competence to retinal progenitor cells (RPCs). Function is isoform-specific and is modulated by dominant-negative inactive isoforms. This is DNA-binding protein Ikaros (Ikzf1) from Mus musculus (Mouse).